The following is a 369-amino-acid chain: Cobalt-precorrin-5B C(1)-methyltransferase (369 aa).

Belongs to the CbiD family.

It carries out the reaction Co-precorrin-5B + S-adenosyl-L-methionine = Co-precorrin-6A + S-adenosyl-L-homocysteine. The protein operates within cofactor biosynthesis; adenosylcobalamin biosynthesis; cob(II)yrinate a,c-diamide from sirohydrochlorin (anaerobic route): step 6/10. Functionally, catalyzes the methylation of C-1 in cobalt-precorrin-5B to form cobalt-precorrin-6A. In Brucella melitensis biotype 1 (strain ATCC 23456 / CCUG 17765 / NCTC 10094 / 16M), this protein is Cobalt-precorrin-5B C(1)-methyltransferase.